Here is a 1241-residue protein sequence, read N- to C-terminus: ATP-dependent helicase/nuclease subunit A (1241 aa).

The 474-residue stretch at 12–485 (SQWTDDQWKA…IDLAKNFRSR (474 aa)) folds into the UvrD-like helicase ATP-binding domain. Residue 33–40 (AAAGSGKT) participates in ATP binding. The UvrD-like helicase C-terminal domain maps to 505-805 (GEIDYDADAE…RIMTIHKSKG (301 aa)).

Belongs to the helicase family. AddA subfamily. As to quaternary structure, heterodimer of AddA and AddB/RexB. Mg(2+) is required as a cofactor.

The catalysed reaction is Couples ATP hydrolysis with the unwinding of duplex DNA by translocating in the 3'-5' direction.. It carries out the reaction ATP + H2O = ADP + phosphate + H(+). In terms of biological role, the heterodimer acts as both an ATP-dependent DNA helicase and an ATP-dependent, dual-direction single-stranded exonuclease. Recognizes the chi site generating a DNA molecule suitable for the initiation of homologous recombination. The AddA nuclease domain is required for chi fragment generation; this subunit has the helicase and 3' -&gt; 5' nuclease activities. The sequence is that of ATP-dependent helicase/nuclease subunit A from Bacillus anthracis.